The primary structure comprises 207 residues: Serotonin N-acetyltransferase (207 aa).

The tract at residues Met-1 to Arg-28 is disordered. Residue Thr-31 is modified to Phosphothreonine; by PKA. Residues Ser-35 to Arg-202 form the N-acetyltransferase domain. Leu-124 provides a ligand contact to substrate. Acetyl-CoA-binding positions include Leu-124–Val-126 and Gln-132–Pro-137. Met-159 provides a ligand contact to substrate. Tyr-168–Arg-170 is a binding site for acetyl-CoA. Ser-205 is subject to Phosphoserine.

It belongs to the acetyltransferase family. AANAT subfamily. In terms of assembly, monomer. Interacts with several 14-3-3 proteins, including YWHAB, YWHAE, YWHAG and YWHAZ, preferentially when phosphorylated at Thr-31. Phosphorylation on Ser-205 also allows binding to YWHAZ, but with lower affinity. The interaction with YWHAZ considerably increases affinity for arylalkylamines and acetyl-CoA and protects the enzyme from dephosphorylation and proteasomal degradation. It may also prevent thiol-dependent inactivation. In terms of processing, cAMP-dependent phosphorylation on both N-terminal Thr-31 and C-terminal Ser-205 regulates AANAT activity by promoting interaction with 14-3-3 proteins.

The protein resides in the cytoplasm. It catalyses the reaction a 2-arylethylamine + acetyl-CoA = an N-acetyl-2-arylethylamine + CoA + H(+). Its pathway is aromatic compound metabolism; melatonin biosynthesis; melatonin from serotonin: step 1/2. Its function is as follows. Controls the night/day rhythm of melatonin production in the pineal gland. Catalyzes the N-acetylation of serotonin into N-acetylserotonin, the penultimate step in the synthesis of melatonin. The chain is Serotonin N-acetyltransferase (AANAT) from Pan troglodytes (Chimpanzee).